The primary structure comprises 96 residues: UPF0235 protein Helmi_20270 (96 aa).

Belongs to the UPF0235 family.

This is UPF0235 protein Helmi_20270 from Heliobacterium modesticaldum (strain ATCC 51547 / Ice1).